We begin with the raw amino-acid sequence, 196 residues long: dTTP/UTP pyrophosphatase (196 aa).

Asp-75 (proton acceptor) is an active-site residue.

This sequence belongs to the Maf family. YhdE subfamily. A divalent metal cation is required as a cofactor.

The protein resides in the cytoplasm. The enzyme catalyses dTTP + H2O = dTMP + diphosphate + H(+). The catalysed reaction is UTP + H2O = UMP + diphosphate + H(+). Its function is as follows. Nucleoside triphosphate pyrophosphatase that hydrolyzes dTTP and UTP. May have a dual role in cell division arrest and in preventing the incorporation of modified nucleotides into cellular nucleic acids. The polypeptide is dTTP/UTP pyrophosphatase (Wolbachia pipientis subsp. Culex pipiens (strain wPip)).